We begin with the raw amino-acid sequence, 106 residues long: DNA-directed RNA polymerase subunit omega (106 aa).

Positions 76-106 (REPAREAAEPAGEAPEEQQRAAGEREDQGAA) are disordered. The segment covering 92-106 (EQQRAAGEREDQGAA) has biased composition (basic and acidic residues).

It belongs to the RNA polymerase subunit omega family. In terms of assembly, the RNAP catalytic core consists of 2 alpha, 1 beta, 1 beta' and 1 omega subunit. When a sigma factor is associated with the core the holoenzyme is formed, which can initiate transcription.

It carries out the reaction RNA(n) + a ribonucleoside 5'-triphosphate = RNA(n+1) + diphosphate. Promotes RNA polymerase assembly. Latches the N- and C-terminal regions of the beta' subunit thereby facilitating its interaction with the beta and alpha subunits. The protein is DNA-directed RNA polymerase subunit omega of Rubrobacter xylanophilus (strain DSM 9941 / JCM 11954 / NBRC 16129 / PRD-1).